Consider the following 208-residue polypeptide: Large ribosomal subunit protein uL4 (208 aa).

The disordered stretch occupies residues 47–84; the sequence is ARAARERSDVARTGKKFGRQKGGGTARHGDRRAPVFIG. Residues 49–58 are compositionally biased toward basic and acidic residues; it reads AARERSDVAR.

It belongs to the universal ribosomal protein uL4 family. Part of the 50S ribosomal subunit.

One of the primary rRNA binding proteins, this protein initially binds near the 5'-end of the 23S rRNA. It is important during the early stages of 50S assembly. It makes multiple contacts with different domains of the 23S rRNA in the assembled 50S subunit and ribosome. In terms of biological role, forms part of the polypeptide exit tunnel. The chain is Large ribosomal subunit protein uL4 from Rhizorhabdus wittichii (strain DSM 6014 / CCUG 31198 / JCM 15750 / NBRC 105917 / EY 4224 / RW1) (Sphingomonas wittichii).